Here is a 289-residue protein sequence, read N- to C-terminus: Ubiquinone biosynthesis O-methyltransferase (289 aa).

Position 36 (Arg-36) interacts with S-adenosyl-L-methionine. Residues 50-98 (RHLSKLTYREELVGNMQHSTAAYALVREDASSRLTHKLPLEAEFEKMSN) enclose the RPE1 insert domain. Residues Gly-109, Asp-130, and Leu-172 each coordinate S-adenosyl-L-methionine.

Belongs to the methyltransferase superfamily. UbiG/COQ3 family.

The catalysed reaction is a 3-demethylubiquinol + S-adenosyl-L-methionine = a ubiquinol + S-adenosyl-L-homocysteine + H(+). It catalyses the reaction a 3-(all-trans-polyprenyl)benzene-1,2-diol + S-adenosyl-L-methionine = a 2-methoxy-6-(all-trans-polyprenyl)phenol + S-adenosyl-L-homocysteine + H(+). It functions in the pathway cofactor biosynthesis; ubiquinone biosynthesis. In terms of biological role, O-methyltransferase that catalyzes the 2 O-methylation steps in the ubiquinone biosynthetic pathway. This Rickettsia conorii (strain ATCC VR-613 / Malish 7) protein is Ubiquinone biosynthesis O-methyltransferase.